The following is a 383-amino-acid chain: F-box/kelch-repeat protein At1g16250 (383 aa).

The region spanning 7–54 (SIIPGLPDDLALRCIAKLSHGYHGVLECVSRGWRDLVRGADYSCYKAR) is the F-box domain. Kelch repeat units follow at residues 50-103 (CYKA…GFAC), 109-165 (CLLV…SVSG), 166-214 (KVYV…SYRG), 216-263 (FHVL…VMKN), and 318-377 (ELYV…CVSL).

This Arabidopsis thaliana (Mouse-ear cress) protein is F-box/kelch-repeat protein At1g16250.